The primary structure comprises 95 residues: Parvalbumin beta 3 (95 aa).

A1 is modified (N-acetylalanine). 2 consecutive EF-hand domains span residues 39-66 (FFAIIDQDHSGFIEEDELKLFLQTFSAG) and 77-95 (DVDGDGMIGVDEFVALVKA). The Ca(2+) site is built by D44, D46, S48, F50, E52, E55, D77, D79, D81, M83, and E88.

It belongs to the parvalbumin family.

Its function is as follows. In muscle, parvalbumin is thought to be involved in relaxation after contraction. It binds two calcium ions. In Merluccius paradoxus (Deep-water Cape hake), this protein is Parvalbumin beta 3.